A 124-amino-acid polypeptide reads, in one-letter code: MPTINQLICKGRSGLTRKKKVPALGKCNPQRRGVCTKVYTTTPRKPNSALRKVARVKISGYGEVTAYIPGEGHNLQEHSVVLIRGGRVKDLPGVRYHIIRGALDLRGVQNRKKARSKYGVKKSG.

Position 90 is a 3-methylthioaspartic acid (aspartate 90).

Belongs to the universal ribosomal protein uS12 family. Part of the 30S ribosomal subunit. Contacts proteins S8 and S17. May interact with IF1 in the 30S initiation complex.

With S4 and S5 plays an important role in translational accuracy. Its function is as follows. Interacts with and stabilizes bases of the 16S rRNA that are involved in tRNA selection in the A site and with the mRNA backbone. Located at the interface of the 30S and 50S subunits, it traverses the body of the 30S subunit contacting proteins on the other side and probably holding the rRNA structure together. The combined cluster of proteins S8, S12 and S17 appears to hold together the shoulder and platform of the 30S subunit. In Wolbachia pipientis subsp. Culex pipiens (strain wPip), this protein is Small ribosomal subunit protein uS12.